Here is a 124-residue protein sequence, read N- to C-terminus: Small ribosomal subunit protein uS12 (124 aa).

3-methylthioaspartic acid is present on Asp89. The interval 104 to 124 (TDGVENRKQSRSKYGTKRPKK) is disordered. A compositionally biased stretch (basic residues) spans 112–124 (QSRSKYGTKRPKK).

It belongs to the universal ribosomal protein uS12 family. As to quaternary structure, part of the 30S ribosomal subunit. Contacts proteins S8 and S17. May interact with IF1 in the 30S initiation complex.

Functionally, with S4 and S5 plays an important role in translational accuracy. Its function is as follows. Interacts with and stabilizes bases of the 16S rRNA that are involved in tRNA selection in the A site and with the mRNA backbone. Located at the interface of the 30S and 50S subunits, it traverses the body of the 30S subunit contacting proteins on the other side and probably holding the rRNA structure together. The combined cluster of proteins S8, S12 and S17 appears to hold together the shoulder and platform of the 30S subunit. This chain is Small ribosomal subunit protein uS12, found in Thermosipho melanesiensis (strain DSM 12029 / CIP 104789 / BI429).